Consider the following 309-residue polypeptide: ATP synthase gamma chain (309 aa).

Belongs to the ATPase gamma chain family. F-type ATPases have 2 components, CF(1) - the catalytic core - and CF(0) - the membrane proton channel. CF(1) has five subunits: alpha(3), beta(3), gamma(1), delta(1), epsilon(1). CF(0) has three main subunits: a, b and c.

The protein localises to the cell membrane. Its function is as follows. Produces ATP from ADP in the presence of a proton gradient across the membrane. The gamma chain is believed to be important in regulating ATPase activity and the flow of protons through the CF(0) complex. This chain is ATP synthase gamma chain, found in Mycolicibacterium vanbaalenii (strain DSM 7251 / JCM 13017 / BCRC 16820 / KCTC 9966 / NRRL B-24157 / PYR-1) (Mycobacterium vanbaalenii).